The primary structure comprises 887 residues: Tubulin polyglutamylase TTLL7 (887 aa).

The interval 1-21 (MPSLPQEGVIQGPSPLDLNTE) is disordered. A TTL domain is found at 38–390 (KGTITANVAG…RTSDKRRNLA (353 aa)). Residues lysine 160, 166–167 (MG), 188–191 (QEYI), and 201–203 (KFD) contribute to the ATP site. Arginine 227 is an L-glutamate binding site. 249–250 (TN) is an ATP binding site. The L-glutamate site is built by tyrosine 251, serine 252, and lysine 271. Mg(2+) contacts are provided by aspartate 336, glutamate 349, and asparagine 351. Lysine 367 contacts L-glutamate. The interval 388 to 450 (NLAKQKAEAQ…ISREEHENRH (63 aa)) is c-MTBD region. Disordered stretches follow at residues 519-621 (MGKT…TRPF) and 651-676 (LPHSNDACSTNSQVSESLRQLKTKEQ). Positions 548 to 560 (SSDSSYDSSSSSS) are enriched in low complexity. Polar residues-rich tracts occupy residues 593–621 (QQPSSIRRSVSCPRSISAQSPSSGDTRPF) and 656–670 (DACSTNSQVSESLRQ).

This sequence belongs to the tubulin--tyrosine ligase family. In terms of assembly, interacts with both alpha- and beta-tubulin (via C-terminal tubulin tails). Requires Mg(2+) as cofactor. As to expression, highly expressed in the nervous system including spinal cord, thalamus, hippocampus, hypothalamus and cerebellum.

Its subcellular location is the cell projection. The protein resides in the cilium. It is found in the cytoplasm. It localises to the cytoskeleton. The protein localises to the cilium basal body. Its subcellular location is the dendrite. The protein resides in the perikaryon. The enzyme catalyses L-glutamyl-[protein] + L-glutamate + ATP = gamma-L-glutamyl-L-glutamyl-[protein] + ADP + phosphate + H(+). It catalyses the reaction (L-glutamyl)(n)-gamma-L-glutamyl-L-glutamyl-[protein] + L-glutamate + ATP = (L-glutamyl)(n+1)-gamma-L-glutamyl-L-glutamyl-[protein] + ADP + phosphate + H(+). In terms of biological role, polyglutamylase which modifies tubulin, generating polyglutamate side chains of variable lengths on the gamma-carboxyl group of specific glutamate residues within the C-terminal tail of tubulin. Mediates both ATP-dependent initiation and elongation steps of the polyglutamylation reaction. Preferentially modifies the beta-tubulin tail over an alpha-tail. Competes with monoglycylase TTLL3 for modification site on beta-tubulin substrate, thereby creating an anticorrelation between glycylation and glutamylation reactions. Required for neurite growth; responsible for the strong increase in tubulin polyglutamylation during postnatal neuronal maturation. The polypeptide is Tubulin polyglutamylase TTLL7 (Homo sapiens (Human)).